The sequence spans 434 residues: MAKTDIARRVYNHAWKLDPIIRSLIDTDFYKLLMLQMIWKLYPDVNASFTLINRTKRVHLAEEIDEGDLREQLDHARTLRLSKKEMIWLAGNSFYGRAQIFEPEFLAWLSNFQLPEYELSKKDGQYVLDFHGSWKETTMWEIPALAIVNELRSRSAMKALGPFTLDVLYARAKAKMWSKVERLKELPGLRISDFGTRRRHSFLWQRWCVEALKEGIGPAFTGTSNVLLAMDSDLEAVGTNAHELPMVAAALAQTDEQLRNAPYKILRDWNKLYGGNLLIVLPDAFGTAAFLRDAPEWVADWTGFRPDSAPPIEGGEKIIDWWKKMGRDPRQKLLIFSDGLDVDAIIDTYRHFEGRVRMSFGWGTNLTNDFAGCAPTEISGLNPISIVCKVSDANGRPAVKLSDNPQKATGEPAEVERYLKFFGAEDRVDQTVLV.

Residue histidine 242 is modified to Phosphohistidine; by autocatalysis.

The protein belongs to the NAPRTase family. In terms of processing, transiently phosphorylated on a His residue during the reaction cycle. Phosphorylation strongly increases the affinity for substrates and increases the rate of nicotinate D-ribonucleotide production. Dephosphorylation regenerates the low-affinity form of the enzyme, leading to product release.

It catalyses the reaction nicotinate + 5-phospho-alpha-D-ribose 1-diphosphate + ATP + H2O = nicotinate beta-D-ribonucleotide + ADP + phosphate + diphosphate. It participates in cofactor biosynthesis; NAD(+) biosynthesis; nicotinate D-ribonucleotide from nicotinate: step 1/1. In terms of biological role, catalyzes the synthesis of beta-nicotinate D-ribonucleotide from nicotinate and 5-phospho-D-ribose 1-phosphate at the expense of ATP. This Rhizobium etli (strain ATCC 51251 / DSM 11541 / JCM 21823 / NBRC 15573 / CFN 42) protein is Nicotinate phosphoribosyltransferase.